The chain runs to 475 residues: Citrate synthase, mitochondrial (475 aa).

Active-site residues include His-310, His-356, and Asp-411.

This sequence belongs to the citrate synthase family.

The protein localises to the mitochondrion matrix. The catalysed reaction is oxaloacetate + acetyl-CoA + H2O = citrate + CoA + H(+). It participates in carbohydrate metabolism; tricarboxylic acid cycle; isocitrate from oxaloacetate: step 1/2. In Aspergillus niger, this protein is Citrate synthase, mitochondrial (cit-1).